Here is a 410-residue protein sequence, read N- to C-terminus: LL-diaminopimelate aminotransferase (410 aa).

Positions 15 and 42 each coordinate substrate. Pyridoxal 5'-phosphate is bound by residues tyrosine 72, 108–109 (AK), tyrosine 132, asparagine 187, tyrosine 218, and 246–248 (SFS). 3 residues coordinate substrate: lysine 109, tyrosine 132, and asparagine 187. Lysine 249 is modified (N6-(pyridoxal phosphate)lysine). Positions 257 and 292 each coordinate pyridoxal 5'-phosphate. Residues asparagine 292 and arginine 388 each contribute to the substrate site.

Belongs to the class-I pyridoxal-phosphate-dependent aminotransferase family. LL-diaminopimelate aminotransferase subfamily. Homodimer. Pyridoxal 5'-phosphate serves as cofactor.

It catalyses the reaction (2S,6S)-2,6-diaminopimelate + 2-oxoglutarate = (S)-2,3,4,5-tetrahydrodipicolinate + L-glutamate + H2O + H(+). It functions in the pathway amino-acid biosynthesis; L-lysine biosynthesis via DAP pathway; LL-2,6-diaminopimelate from (S)-tetrahydrodipicolinate (aminotransferase route): step 1/1. Involved in the synthesis of meso-diaminopimelate (m-DAP or DL-DAP), required for both lysine and peptidoglycan biosynthesis. Catalyzes the direct conversion of tetrahydrodipicolinate to LL-diaminopimelate. Is also able to catalyze the reverse reaction in vitro, i.e. the transamination of LL-diaminopimelate with 2-oxoglutarate to produce 2-oxo-6-aminopimelate (in equilibrium with tetrahydrodipicolinate) and glutamate. Has maximal aminotransferase activity using 2-oxoglutarate as an amino group acceptor, and cannot use oxaloacetate instead of 2-oxoglutarate, although 2-oxoadipate can substitute with 21% relative activity. Cannot use m-DAP, lysine or ornithine as the amino-group donor, when using 2-oxoglutarate as the amino-group acceptor. The protein is LL-diaminopimelate aminotransferase of Methanothermobacter thermautotrophicus (strain ATCC 29096 / DSM 1053 / JCM 10044 / NBRC 100330 / Delta H) (Methanobacterium thermoautotrophicum).